The following is a 663-amino-acid chain: Transmembrane 9 superfamily member 2 (663 aa).

Positions 1-28 (MSARLPVLSPPRWPRLLLLSLLLLGAVP) are cleaved as a signal peptide. Residues 29 to 300 (GPRRSGAFYL…LESMPHTHIQ (272 aa)) are Lumenal-facing. The helical transmembrane segment at 301 to 321 (WFSIMNSLVIVLFLSGMVAMI) threads the bilayer. Topologically, residues 322 to 374 (MLRTLHKDIARYNQMDSTEDAQEEFGWKLVHGDIFRPPRKGMLLSVFLGSGTQ) are cytoplasmic. Residues 375-395 (ILIMTFVTLFFACLGFLSPAN) traverse the membrane as a helical segment. Residues 396–398 (RGA) lie on the Lumenal side of the membrane. The chain crosses the membrane as a helical span at residues 399 to 419 (LMTCAVVLWVLLGTPAGYVAA). Topologically, residues 420-437 (RFYKSFGGEKWKTNVLLT) are cytoplasmic. A helical transmembrane segment spans residues 438-458 (SFLCPGIVFADFFIMNLILWG). Residues 459 to 466 (EGSSAAIP) lie on the Lumenal side of the membrane. The chain crosses the membrane as a helical span at residues 467–487 (FGTLVAILALWFCISVPLTFI). The Cytoplasmic segment spans residues 488–522 (GAYFGFKKNAIEHPVRTNQIPRQIPEQSFYTKPLP). Residues 523–543 (GIIMGGILPFGCIFIQLFFIL) traverse the membrane as a helical segment. Residues 544–554 (NSIWSHQMYYM) lie on the Lumenal side of the membrane. The helical transmembrane segment at 555–575 (FGFLFLVFIILVITCSEATIL) threads the bilayer. Over 576 to 591 (LCYFHLCAEDYHWQWR) the chain is Cytoplasmic. A helical transmembrane segment spans residues 592-612 (SFLTSGFTAVYFLIYAVHYFF). At 613-631 (SKLQITGTASTILYFGYTM) the chain is on the lumenal side. The chain crosses the membrane as a helical span at residues 632 to 652 (IMVLIFFLFTGTIGFFACFWF). At 653–663 (VTKIYSVVKVD) the chain is on the cytoplasmic side.

It belongs to the nonaspanin (TM9SF) (TC 9.A.2) family. In terms of tissue distribution, ubiquitously expressed. Especially abundant in pancreas, highly expressed in kidney, lower levels in heart, brain, skeletal muscle and placenta. Lowest expression in lung and liver.

The protein localises to the endosome membrane. It is found in the golgi outpost. The protein resides in the cytoplasm. It localises to the cytoskeleton. Its subcellular location is the microtubule organizing center. Its function is as follows. In the intracellular compartments, may function as a channel or small molecule transporter. This Homo sapiens (Human) protein is Transmembrane 9 superfamily member 2 (TM9SF2).